A 201-amino-acid chain; its full sequence is 3-isopropylmalate dehydratase small subunit (201 aa).

The protein belongs to the LeuD family. LeuD type 1 subfamily. In terms of assembly, heterodimer of LeuC and LeuD.

The catalysed reaction is (2R,3S)-3-isopropylmalate = (2S)-2-isopropylmalate. It functions in the pathway amino-acid biosynthesis; L-leucine biosynthesis; L-leucine from 3-methyl-2-oxobutanoate: step 2/4. Catalyzes the isomerization between 2-isopropylmalate and 3-isopropylmalate, via the formation of 2-isopropylmaleate. This chain is 3-isopropylmalate dehydratase small subunit, found in Salmonella schwarzengrund (strain CVM19633).